Consider the following 872-residue polypeptide: Alanine--tRNA ligase (872 aa).

Residues histidine 567, histidine 571, cysteine 669, and histidine 673 each contribute to the Zn(2+) site.

The protein belongs to the class-II aminoacyl-tRNA synthetase family. Zn(2+) serves as cofactor.

It is found in the cytoplasm. It carries out the reaction tRNA(Ala) + L-alanine + ATP = L-alanyl-tRNA(Ala) + AMP + diphosphate. Its function is as follows. Catalyzes the attachment of alanine to tRNA(Ala) in a two-step reaction: alanine is first activated by ATP to form Ala-AMP and then transferred to the acceptor end of tRNA(Ala). Also edits incorrectly charged Ser-tRNA(Ala) and Gly-tRNA(Ala) via its editing domain. This Streptococcus pyogenes serotype M3 (strain ATCC BAA-595 / MGAS315) protein is Alanine--tRNA ligase.